The sequence spans 446 residues: Phosphoglucosamine mutase (446 aa).

The active-site Phosphoserine intermediate is the serine 102. Serine 102, aspartate 241, aspartate 243, and aspartate 245 together coordinate Mg(2+). The residue at position 102 (serine 102) is a Phosphoserine.

This sequence belongs to the phosphohexose mutase family. The cofactor is Mg(2+). Post-translationally, activated by phosphorylation.

The catalysed reaction is alpha-D-glucosamine 1-phosphate = D-glucosamine 6-phosphate. Its function is as follows. Catalyzes the conversion of glucosamine-6-phosphate to glucosamine-1-phosphate. The chain is Phosphoglucosamine mutase from Xylella fastidiosa (strain M23).